The chain runs to 137 residues: Large ribosomal subunit protein uL16 (137 aa).

It belongs to the universal ribosomal protein uL16 family. As to quaternary structure, part of the 50S ribosomal subunit.

Binds 23S rRNA and is also seen to make contacts with the A and possibly P site tRNAs. The chain is Large ribosomal subunit protein uL16 from Solidesulfovibrio magneticus (strain ATCC 700980 / DSM 13731 / RS-1) (Desulfovibrio magneticus).